The primary structure comprises 718 residues: Pentatricopeptide repeat-containing protein At1g22960, mitochondrial (718 aa).

A mitochondrion-targeting transit peptide spans 1–11 (MILCLRLCLRA). PPR repeat units lie at residues 167-201 (ALKL…GFLP), 202-236 (SVRN…GIMP), 237-271 (TVIT…NIEF), 272-306 (SEVT…GFAV), 307-341 (TPYS…GIYP), 342-372 (TTST…MAAP), 373-407 (DVVS…DIHP), 408-442 (SIVT…LIFP), 443-477 (DVIT…GIKP), 478-512 (DGYA…DHHA), 514-548 (DLTI…GLVP), 549-583 (DHVT…RLYP), 584-618 (SVIT…GVRP), 619-653 (NVMT…GIPP), and 654-688 (NKYS…EIEP).

Belongs to the PPR family. P subfamily.

The protein localises to the mitochondrion. This Arabidopsis thaliana (Mouse-ear cress) protein is Pentatricopeptide repeat-containing protein At1g22960, mitochondrial.